Here is a 976-residue protein sequence, read N- to C-terminus: Receptor-like protein 14 (976 aa).

The first 26 residues, 1–26, serve as a signal peptide directing secretion; that stretch reads MERKVFSGQNLIWVMLLLVQLRGYKC. The Extracellular segment spans residues 27–928; it reads CIEKERKALL…DDDDEAAIDM (902 aa). Asn60, Asn75, Asn98, Asn112, Asn151, Asn185, and Asn200 each carry an N-linked (GlcNAc...) asparagine glycan. 17 LRR repeats span residues 105–127, 137–160, 162–185, 186–209, 210–233, 234–258, 260–283, 284–306, 308–331, 333–358, 359–381, 382–405, 407–428, 429–452, 454–477, 478–501, and 503–528; these read FEEL…LFDD, LRNL…FLNA, TSLT…ELKN, LTKL…FTHL, EKLK…ELKV, LTNL…VFCE, KNLR…LGNL, NKLR…SFNS, ESLE…PLAN, TKLK…WLPK, FQLT…LVYQ, TNLR…LLEN, PELK…PTIV, HKLQ…IGHV, PRLL…MGEM, NDIS…LLTG, and FSLI…RLTS. N-linked (GlcNAc...) asparagine glycosylation occurs at Asn331. Asn416 is a glycosylation site (N-linked (GlcNAc...) asparagine). Residues Asn460 and Asn489 are each glycosylated (N-linked (GlcNAc...) asparagine). The LRR 18; degenerate repeat unit spans residues 530 to 549; that stretch reads IVLRMHNNLFTGEIGVGLRT. LRR repeat units follow at residues 550 to 573, 575 to 599, 600 to 623, 625 to 645, 646 to 669, 671 to 692, 693 to 715, 782 to 805, 806 to 829, 831 to 854, and 856 to 879; these read LVNL…SIPP, SSHL…LLAI, HHLN…VVNS, YGIK…VTLL, ENAY…VNTG, MITL…LCDL, TSIR…CLNH, LDYM…ELGD, LSKL…NFSK, KDIE…LTNL, and SLAV…QFNT. A glycan (N-linked (GlcNAc...) asparagine) is linked at Asn552. A glycan (N-linked (GlcNAc...) asparagine) is linked at Asn633. N-linked (GlcNAc...) asparagine glycosylation is present at Asn680. N-linked (GlcNAc...) asparagine glycans are attached at residues Asn813, Asn826, Asn853, Asn861, and Asn866. A disordered region spans residues 897–922; sequence DRSCEGKKNTKEADNGGEEEEEDDDD. Residues 898 to 910 are compositionally biased toward basic and acidic residues; sequence RSCEGKKNTKEAD. A compositionally biased stretch (acidic residues) spans 911–922; sequence NGGEEEEEDDDD. Residues 929–949 traverse the membrane as a helical segment; sequence VVLYWTTGSTYAIALIGILVL. Topologically, residues 950 to 976 are cytoplasmic; the sequence is MCFDCPWRRTWLCIVDAFIASGKSMFS.

The protein belongs to the RLP family.

Its subcellular location is the cell membrane. The sequence is that of Receptor-like protein 14 from Arabidopsis thaliana (Mouse-ear cress).